The primary structure comprises 137 residues: Nucleoside diphosphate kinase (137 aa).

The ATP site is built by lysine 9, phenylalanine 57, arginine 85, threonine 91, arginine 102, and asparagine 112. The active-site Pros-phosphohistidine intermediate is the histidine 115.

It belongs to the NDK family. Homotetramer. Mg(2+) is required as a cofactor.

Its subcellular location is the cytoplasm. The catalysed reaction is a 2'-deoxyribonucleoside 5'-diphosphate + ATP = a 2'-deoxyribonucleoside 5'-triphosphate + ADP. It carries out the reaction a ribonucleoside 5'-diphosphate + ATP = a ribonucleoside 5'-triphosphate + ADP. Major role in the synthesis of nucleoside triphosphates other than ATP. The ATP gamma phosphate is transferred to the NDP beta phosphate via a ping-pong mechanism, using a phosphorylated active-site intermediate. In Campylobacter jejuni subsp. doylei (strain ATCC BAA-1458 / RM4099 / 269.97), this protein is Nucleoside diphosphate kinase.